The chain runs to 421 residues: Subtilisin-like protease 2 (421 aa).

Positions 1–16 are cleaved as a signal peptide; sequence MQLLNFGLLLLPFVAG. Residues 17 to 122 constitute a propeptide that is removed on maturation; the sequence is DLAPQPEPLL…VHPDQHVYLA (106 aa). An Inhibitor I9 domain is found at 36 to 122; it reads QYIVTLKEGL…VHPDQHVYLA (87 aa). One can recognise a Peptidase S8 domain in the interval 131-421; it reads RWGLGYMSSK…ERKFTLPKYF (291 aa). Catalysis depends on charge relay system residues D169 and H201. Residues N248, N261, and N348 are each glycosylated (N-linked (GlcNAc...) asparagine). The Charge relay system role is filled by S357. N-linked (GlcNAc...) asparagine glycosylation occurs at N388.

It belongs to the peptidase S8 family.

It is found in the secreted. Its function is as follows. Secreted subtilisin-like serine protease with keratinolytic activity that contributes to pathogenicity. This Trichophyton tonsurans (Scalp ringworm fungus) protein is Subtilisin-like protease 2 (SUB2).